Consider the following 509-residue polypeptide: Bestrophin-2a (509 aa).

Over 1 to 31 (MTVTYTARVANARFGGFSQLLLLWRGSIYKL) the chain is Cytoplasmic. A Ca(2+)-binding site is contributed by Ala-10. A helical membrane pass occupies residues 32–51 (LWRELLCFLGFYMALSAAYR). The Extracellular segment spans residues 52-60 (FVLTEGQKR). A helical transmembrane segment spans residues 61 to 82 (YFEKLVIYCDQYASLIPVSFVL). Residues 83-238 (GFYVTLVVNR…WISVPLVYTQ (156 aa)) lie on the Cytoplasmic side of the membrane. Residues 239 to 255 (VVTIALYSYFLACLIGR) form a helical membrane-spanning segment. Residues 256–274 (QFLDPAQGYKDHDLDLCVP) are Extracellular-facing. A helical transmembrane segment spans residues 275–288 (IFTLLQFFFYAGWL). At 289–509 (KVAEQLINPF…PIGEEEENLA (221 aa)) the chain is on the cytoplasmic side. Ca(2+) contacts are provided by Gln-293, Asn-296, Asp-301, and Asp-304. The tract at residues 454-509 (DPGLPEPEAPPPAGPEPLTLIPGPVEPFSIVTMPGPRGPAPPWLPSPIGEEEENLA) is disordered. Composition is skewed to pro residues over residues 457 to 468 (LPEPEAPPPAGP) and 489 to 498 (PRGPAPPWLP).

This sequence belongs to the anion channel-forming bestrophin (TC 1.A.46) family. Calcium-sensitive chloride channel subfamily. In terms of assembly, pentamer. Interacts with GLUL; this interaction tethers a fraction of GLUL to the membrane, causing a decrease of cytosolic glutamine synthase (GS) activity and inhibits the chloride channel activity of BEST2 by affecting the gating at the aperture in the absence of intracellular glutamate. In terms of tissue distribution, mainly confined to the retinal pigment epithelium. Expressed in colon.

It localises to the cell membrane. The protein localises to the basolateral cell membrane. It carries out the reaction chloride(in) = chloride(out). The enzyme catalyses hydrogencarbonate(in) = hydrogencarbonate(out). The catalysed reaction is L-glutamate(out) = L-glutamate(in). It catalyses the reaction iodide(out) = iodide(in). It carries out the reaction L-glutamine(out) = L-glutamine(in). With respect to regulation, chloride channel activity is allosterically inhibited by GLUL/glutamine synthase (GS) which affects the gating at the aperture in the absence of intracellular glutamate. Inhibitory effect of GLUL is relieved upon increasing of L-glutamate intracellular level. Ligand-gated anion channel that allows the movement of anions across cell membranes when activated by calcium (Ca2+). Transports a large specter of anions, namely mediates the movement of chloride, L-glutamate and iodide. Calcium-binding triggers the dilation of the aperture, but calcium-dependent gating is only effective when the size of the passing anion is bigger than the closed aperture. Mediates the calcium-activated hydrogencarbonate movement and participates in colonic hydrogencarbonate secretion concomitant with mucin secretion. In non-pigmented epithelium (NPE), mediates the efflux of intracellular L-glutamate; binding of intracellular L-glutamate activates and open both the neck and the aperture of the channel, leading to L-glutamate exit promoting chloride influx movement from the extracellular side in trans. Also exhibits a directional permeability for intracellular glutamine, in a similar manner as for L-glutamate. This Homo sapiens (Human) protein is Bestrophin-2a.